The following is an 88-amino-acid chain: Carboxysome shell vertex protein CsoS4A (88 aa).

The 76-residue stretch at 1–76 folds into the BMV domain; the sequence is MLICKVLKPL…SDLTIVGIID (76 aa).

This sequence belongs to the CcmL/EutN family. CsoS4 subfamily. As to quaternary structure, homopentamer.

The protein localises to the carboxysome. In terms of biological role, probably forms vertices in the carboxysome, a polyhedral inclusion where RuBisCO (ribulose bisphosphate carboxylase, cbbL-cbbS) is sequestered. Has been modeled to induce curvature upon insertion into an otherwise flat hexagonal layer of major carboxysome subunits. Has not been identified in purified carboxysomes; it is expected to be present in very low amounts. This Prochlorococcus marinus subsp. pastoris (strain CCMP1986 / NIES-2087 / MED4) protein is Carboxysome shell vertex protein CsoS4A.